Here is a 4753-residue protein sequence, read N- to C-terminus: Dynein heavy chain domain-containing protein 1 (4753 aa).

Coiled coils occupy residues 826–858 and 936–991; these read IHAI…ALHE and KLQQ…LSEL. Residues 2688 to 2766 form a disordered region; the sequence is HLGKDHQESE…SRGMKESISH (79 aa). A compositionally biased stretch (acidic residues) spans 2695–2712; the sequence is ESEEEEEEERVPEVESEG. Over residues 2740–2751 the composition is skewed to polar residues; that stretch reads RVSNSRDPSLTP. 3 coiled-coil regions span residues 3125–3227, 3590–3651, and 4431–4460; these read LQQQ…MSKA, MRNQ…QGSK, and GAQL…LTHV. The segment at 3580–3657 is disordered; sequence ALTEGRGKGL…QGSKPAYETQ (78 aa). Residues 3602 to 3615 show a composition bias toward acidic residues; it reads KEEDDESEESNEAE. Residues 3616–3631 are compositionally biased toward basic and acidic residues; that stretch reads DQTKEQKAEERKNEQE. The span at 3632–3641 shows a compositional bias: acidic residues; it reads KEQEENEEKE. The segment at 4669–4697 is disordered; it reads ALQDSPSSQPSPLPPVSISTQAPGTSDLP.

Belongs to the dynein heavy chain family. In terms of tissue distribution, expressed in spermatozoa (at protein level).

It is found in the cell projection. The protein resides in the cilium. It localises to the flagellum. Its function is as follows. Essential for the normal assembly and function of sperm flagella axonemes. This chain is Dynein heavy chain domain-containing protein 1 (DNHD1), found in Homo sapiens (Human).